Here is a 756-residue protein sequence, read N- to C-terminus: Sodium/hydrogen exchanger 8 (756 aa).

Residues 1–31 (MTSIIGAALPYKSPEKAIASSSYSAENDSSP) are Extracellular-facing. Asn27 carries an N-linked (GlcNAc...) asparagine glycan. The chain crosses the membrane as a helical span at residues 32–52 (VDAVIFAGTSLVLGTACRYLF). Residues 53 to 56 (NGTR) lie on the Cytoplasmic side of the membrane. Residues 57-77 (VPYTVVLLVIGIFLGSLEYGT) traverse the membrane as a helical segment. The Extracellular segment spans residues 78–89 (KHNLGKLGHGIR). The chain crosses the membrane as a helical span at residues 90 to 110 (IWNGINPDLLLAVFLPVLLFE). Residues 111 to 125 (SSFSMDVHQIKRCMG) lie on the Cytoplasmic side of the membrane. A helical transmembrane segment spans residues 126–146 (QMVLLAGPGVLISTFCLGALI). Over 147 to 157 (KLTFPYNWDWK) the chain is Extracellular. Residues 158–178 (TSLLLGGLLGATDPVAVVALL) traverse the membrane as a helical segment. At 179-194 (KELGASKKMTTLIDGE) the chain is on the cytoplasmic side. The chain crosses the membrane as a helical span at residues 195–215 (SLMNDGVSVVVFQLFFKMVMG). The Extracellular portion of the chain corresponds to 216 to 225 (HNSDWGSIIK). The chain crosses the membrane as a helical span at residues 226–248 (FLVQNSFGAVGIGLAFGIASVFW). Topologically, residues 249–251 (LKF) are cytoplasmic. A helical membrane pass occupies residues 252–271 (IFNDTVAQITVTLSASYFAY). The Extracellular segment spans residues 272-276 (YTAQE). A helical membrane pass occupies residues 277-297 (WAGVSGILTVMILGMFFAAFA). Residues 298–311 (RTAFKGDSHQSLHH) are Cytoplasmic-facing. Residues 312–332 (FWEMAAYIANTLVFMLSGVII) form a helical membrane-spanning segment. Residues 333–350 (AESVLSGQTISYKGNSWS) lie on the Extracellular side of the membrane. A helical transmembrane segment spans residues 351 to 371 (FLFLLYLYVQLSRCVVVGVLY). The Cytoplasmic portion of the chain corresponds to 372 to 385 (PLLCRSGYGLDWKE). The chain crosses the membrane as a helical span at residues 386-406 (SIILTWSGLRGAVSLSLALSV). Residues 407–422 (KQSSGNSYLSSDTGTR) are Extracellular-facing. Residues 423–443 (FLFLTGGIVFLTLVVNGSTTQ) form a helical membrane-spanning segment. Over 444–756 (LLLHLLRMDT…RSLAIGETDA (313 aa)) the chain is Cytoplasmic.

This sequence belongs to the monovalent cation:proton antiporter 1 (CPA1) transporter (TC 2.A.36) family.

Its subcellular location is the cell membrane. The enzyme catalyses Na(+)(in) + H(+)(out) = Na(+)(out) + H(+)(in). The catalysed reaction is K(+)(in) + H(+)(out) = K(+)(out) + H(+)(in). Its function is as follows. May act in low affinity electroneutral exchange of protons for cations such as Na(+) or K(+) across membranes. May also exchange Li(+) and Cs(+) with a lower affinity. The sequence is that of Sodium/hydrogen exchanger 8 (NHX8) from Arabidopsis thaliana (Mouse-ear cress).